Reading from the N-terminus, the 240-residue chain is Allene oxide cyclase, chloroplastic (240 aa).

The transit peptide at 1–49 (MAAAAPSRVSVRAAAPGQTGGFAKIRPQVVVAAAARSAGVSGRRARSVR) directs the protein to the chloroplast.

The protein belongs to the allene oxide cyclase family.

Its subcellular location is the plastid. It localises to the chloroplast. The catalysed reaction is (9Z,13S,15Z)-12,13-epoxyoctadeca-9,11,15-trienoate = (9S,13S,15Z)-12-oxophyto-10,15-dienoate. It functions in the pathway lipid metabolism; polyunsaturated fatty acid biosynthesis. In terms of biological role, involved in the production of 12-oxo-phytodienoic acid (OPDA), a precursor of jasmonic acid (JA). Required for the production of JA in response to wounding. Necessary for flower and coleoptile development regulation by light, including blue (BL), red (RL) and far red (FR) lights. Involved in the auxin-mediated signaling pathway leading to growth stimulation. Essential for photodestruction of phyA upon activation by RL and FR. Implicated in responses to salt stress (NaCl). Its function is as follows. Confers resistance to incompatible strains of the blast fungus Magnaporthe grisea, jasmonic acid (JA) thus playing a significant role in the resistance to fungal infection. Implicated in riboflavin-induced resistance to the sheath blight Rhizoctonia solani. Required for Pseudomonas fluorescens-mediated JA-dependent induced systemic resistance (ISR). Confers some resistance, independently of the JA pathway but probably via OPDA accumulation, to brown planthopper (BPH, Nilaparvata lugens), a destructive, monophagous, piercing-sucking insect, mainly by reducing its feeding activity and survival rate. Triggers resistance to the chewing insect striped stem borer (SSB) Chilo suppressalis, to the root hemiparasite witchweed Striga hermonthica, and to the root feeder insect rice water weevil Lissorhoptrus oryzophilus, in a JA-dependent manner, by attenuating both the growth mass and growth rate of caterpillars. This is Allene oxide cyclase, chloroplastic from Oryza sativa subsp. indica (Rice).